The primary structure comprises 514 residues: Uridylate cyclase (514 aa).

Guanylate cyclase domains are found at residues 49-190 and 286-428; these read VHMY…AKLA and VSLY…EKRQ. Residues Y52, R105, F178, 184-188, and 291-296 each bind a ribonucleoside 5'-triphosphate; these read NHAAK and DIDGFT. D291, I292, and D339 together coordinate Ca(2+). D291 is a Mn(2+) binding site. Residues 495–514 form a disordered region; the sequence is IRADERQVQPHSRQKVDGSR. Residues 496–514 show a composition bias toward basic and acidic residues; it reads RADERQVQPHSRQKVDGSR.

Belongs to the adenylyl cyclase class-4/guanylyl cyclase family. Pyrimidine cyclase subfamily. As to quaternary structure, monomer. It depends on a divalent metal cation as a cofactor.

It is found in the cytoplasm. It catalyses the reaction UTP = 3',5'-cyclic UMP + diphosphate. Pycsar (pyrimidine cyclase system for antiphage resistance) provides immunity against bacteriophage. The pyrimidine cyclase (PycC) synthesizes cyclic nucleotides in response to infection; these serve as specific second messenger signals. The signals activate the adjacent effector, leading to bacterial cell death and abortive phage infection. A clade A Pycsar system. Its function is as follows. The pyrimidine cyclase gene of a two-gene Pycsar system, generates cyclic UMP (cUMP) from UTP, has little to no activity on ATP, CTP or GTP. Expression of this and adjacent effector PaPycTIR (AC P0DV41) probably confers resistance to bacteriophage. The genes are probably only expressed in response to bacteriophage infection. Does not have adenylyl or guanylyl cyclase activity. This is Uridylate cyclase from Pseudomonas aeruginosa.